Reading from the N-terminus, the 96-residue chain is Small ribosomal subunit protein bS6 (96 aa).

The protein belongs to the bacterial ribosomal protein bS6 family.

In terms of biological role, binds together with bS18 to 16S ribosomal RNA. The protein is Small ribosomal subunit protein bS6 (rpsF) of Mycobacterium leprae (strain TN).